Reading from the N-terminus, the 467-residue chain is UPF0236 protein TTE0610/TTE0881/TTE1053/TTE2432 (467 aa).

It belongs to the UPF0236 family.

This Caldanaerobacter subterraneus subsp. tengcongensis (strain DSM 15242 / JCM 11007 / NBRC 100824 / MB4) (Thermoanaerobacter tengcongensis) protein is UPF0236 protein TTE0610/TTE0881/TTE1053/TTE2432.